The sequence spans 788 residues: 5-methyltetrahydropteroyltriglutamate--homocysteine methyltransferase (788 aa).

5-methyltetrahydropteroyltri-L-glutamate-binding positions include 24–27 and Lys-140; that span reads RELK. L-homocysteine-binding positions include 463 to 465 and Glu-516; that span reads IGS. L-methionine-binding positions include 463-465 and Glu-516; that span reads IGS. 5-methyltetrahydropteroyltri-L-glutamate-binding positions include 547–548 and Trp-593; that span reads RC. Asp-631 is a binding site for L-homocysteine. Asp-631 is an L-methionine binding site. Residue Glu-637 participates in 5-methyltetrahydropteroyltri-L-glutamate binding. The Zn(2+) site is built by His-673, Cys-675, and Glu-697. Residue His-726 is the Proton donor of the active site. Cys-758 is a binding site for Zn(2+).

It belongs to the vitamin-B12 independent methionine synthase family. Requires Zn(2+) as cofactor.

The catalysed reaction is 5-methyltetrahydropteroyltri-L-glutamate + L-homocysteine = tetrahydropteroyltri-L-glutamate + L-methionine. It participates in amino-acid biosynthesis; L-methionine biosynthesis via de novo pathway; L-methionine from L-homocysteine (MetE route): step 1/1. Its function is as follows. Catalyzes the transfer of a methyl group from 5-methyltetrahydrofolate to homocysteine resulting in methionine formation. This chain is 5-methyltetrahydropteroyltriglutamate--homocysteine methyltransferase, found in Rhodopseudomonas palustris (strain TIE-1).